The chain runs to 413 residues: Arginine biosynthesis bifunctional protein ArgJ (413 aa).

T160, K186, T197, E284, N408, and S413 together coordinate substrate. T197 acts as the Nucleophile in catalysis.

This sequence belongs to the ArgJ family. As to quaternary structure, heterotetramer of two alpha and two beta chains.

It localises to the cytoplasm. It catalyses the reaction N(2)-acetyl-L-ornithine + L-glutamate = N-acetyl-L-glutamate + L-ornithine. The catalysed reaction is L-glutamate + acetyl-CoA = N-acetyl-L-glutamate + CoA + H(+). It participates in amino-acid biosynthesis; L-arginine biosynthesis; L-ornithine and N-acetyl-L-glutamate from L-glutamate and N(2)-acetyl-L-ornithine (cyclic): step 1/1. Its pathway is amino-acid biosynthesis; L-arginine biosynthesis; N(2)-acetyl-L-ornithine from L-glutamate: step 1/4. Functionally, catalyzes two activities which are involved in the cyclic version of arginine biosynthesis: the synthesis of N-acetylglutamate from glutamate and acetyl-CoA as the acetyl donor, and of ornithine by transacetylation between N(2)-acetylornithine and glutamate. The protein is Arginine biosynthesis bifunctional protein ArgJ of Burkholderia pseudomallei (strain K96243).